Reading from the N-terminus, the 459-residue chain is Cytosolic carboxypeptidase 6 (459 aa).

Residues 142-418 (IPYTYGQMQI…AFCRALLNFY (277 aa)) enclose the Peptidase M14 domain. His-204, Glu-207, and His-302 together coordinate Zn(2+). The active-site Proton donor/acceptor is Glu-376.

The protein belongs to the peptidase M14 family. It depends on Zn(2+) as a cofactor. In terms of tissue distribution, expressed in labial and amphid neurons.

It is found in the cytoplasm. The enzyme catalyses (L-glutamyl)(n+1)-gamma-L-glutamyl-L-glutamyl-[protein] + H2O = (L-glutamyl)(n)-gamma-L-glutamyl-L-glutamyl-[protein] + L-glutamate. Its function is as follows. Metallocarboxypeptidase that catalyzes the removing of polyglutamate side chains that are present on the gamma-carboxyl group of glutamate residues of tubulin in sensory cilia. Probably via the deglutamylation of tubulin, promotes microtubule stability required for axon regrowth after injury. Also regulates microtubule dynamics in uterine muscle cells. This chain is Cytosolic carboxypeptidase 6, found in Caenorhabditis elegans.